The primary structure comprises 396 residues: MPFRTLDTADLAGKRALVRVDFNVPVDGGKITDDTRLRAALPTIRYLSSKGAKVVLLAHFDRPKGKVVPEMSLAFVAEPLSKLLEQPVAFAADCVGPQARAVVDALENGGVALFENVRFHAGEEKNDADFAAQLAENGDLYVNDAFSAAHRAHASTEALARILPSYPGLAMQRELDALDAALGNPKKPVLGIVGGSKVSTKLDLLRNLVTKLDYLAIGGGMANTFLHAAKIDVGASLCEADMADTALQIIDLAAAAGCKLLLPTDVVVAHEVKPGVAAYTRNVYEVQPEDRILDAGPDTVATLLAAMDASQTLIWNGPLGVFEVPPFDEATVSAAKHAAKLAKSGKIVAVAGGGDTVAALNHAGVSGDFTFVSTAGGAFLEWMEGKTLPGVSALEV.

Substrate-binding positions include 21–23 (DFN), Arg-36, 59–62 (HFDR), Arg-118, and Arg-151. Residues Lys-201, Glu-323, and 353 to 356 (GGDT) each bind ATP.

This sequence belongs to the phosphoglycerate kinase family. Monomer.

Its subcellular location is the cytoplasm. The catalysed reaction is (2R)-3-phosphoglycerate + ATP = (2R)-3-phospho-glyceroyl phosphate + ADP. It participates in carbohydrate degradation; glycolysis; pyruvate from D-glyceraldehyde 3-phosphate: step 2/5. In Caulobacter sp. (strain K31), this protein is Phosphoglycerate kinase.